The primary structure comprises 118 residues: NADH-quinone oxidoreductase subunit A 2 (118 aa).

A run of 3 helical transmembrane segments spans residues 5-25, 62-82, and 87-107; these read YLPIIVLVVVAVLFGCGSLIF, IIAMLFILFDIEAVFLYPWAV, and LGMFGLMEMGVFIVILFVGYI.

It belongs to the complex I subunit 3 family. NDH-1 is composed of 14 different subunits. Subunits NuoA, H, J, K, L, M, N constitute the membrane sector of the complex.

Its subcellular location is the cell inner membrane. It catalyses the reaction a quinone + NADH + 5 H(+)(in) = a quinol + NAD(+) + 4 H(+)(out). Its function is as follows. NDH-1 shuttles electrons from NADH, via FMN and iron-sulfur (Fe-S) centers, to quinones in the respiratory chain. The immediate electron acceptor for the enzyme in this species is believed to be ubiquinone. Couples the redox reaction to proton translocation (for every two electrons transferred, four hydrogen ions are translocated across the cytoplasmic membrane), and thus conserves the redox energy in a proton gradient. The sequence is that of NADH-quinone oxidoreductase subunit A 2 from Geotalea uraniireducens (strain Rf4) (Geobacter uraniireducens).